The primary structure comprises 162 residues: Regulator of sigma D (162 aa).

Belongs to the Rsd/AlgQ family. Interacts with RpoD.

It localises to the cytoplasm. Its function is as follows. Binds RpoD and negatively regulates RpoD-mediated transcription activation by preventing the interaction between the primary sigma factor RpoD with the catalytic core of the RNA polymerase and with promoter DNA. May be involved in replacement of the RNA polymerase sigma subunit from RpoD to RpoS during the transition from exponential growth to the stationary phase. The polypeptide is Regulator of sigma D (Salmonella paratyphi A (strain ATCC 9150 / SARB42)).